Here is a 354-residue protein sequence, read N- to C-terminus: UDP-N-acetylglucosamine--N-acetylmuramyl-(pentapeptide) pyrophosphoryl-undecaprenol N-acetylglucosamine transferase 1 (354 aa).

UDP-N-acetyl-alpha-D-glucosamine is bound by residues 12–14, arginine 163, serine 193, and glutamine 287; that span reads TAG.

This sequence belongs to the glycosyltransferase 28 family. MurG subfamily.

The protein resides in the cell membrane. It catalyses the reaction di-trans,octa-cis-undecaprenyl diphospho-N-acetyl-alpha-D-muramoyl-L-alanyl-D-glutamyl-meso-2,6-diaminopimeloyl-D-alanyl-D-alanine + UDP-N-acetyl-alpha-D-glucosamine = di-trans,octa-cis-undecaprenyl diphospho-[N-acetyl-alpha-D-glucosaminyl-(1-&gt;4)]-N-acetyl-alpha-D-muramoyl-L-alanyl-D-glutamyl-meso-2,6-diaminopimeloyl-D-alanyl-D-alanine + UDP + H(+). Its pathway is cell wall biogenesis; peptidoglycan biosynthesis. Functionally, cell wall formation. Catalyzes the transfer of a GlcNAc subunit on undecaprenyl-pyrophosphoryl-MurNAc-pentapeptide (lipid intermediate I) to form undecaprenyl-pyrophosphoryl-MurNAc-(pentapeptide)GlcNAc (lipid intermediate II). This chain is UDP-N-acetylglucosamine--N-acetylmuramyl-(pentapeptide) pyrophosphoryl-undecaprenol N-acetylglucosamine transferase 1, found in Bacillus thuringiensis (strain Al Hakam).